Reading from the N-terminus, the 89-residue chain is Small ribosomal subunit protein uS15 (89 aa).

Over residues 1 to 21 (MVMTAEDKAQVIGEHKKHDGD) the composition is skewed to basic and acidic residues. The segment at 1–24 (MVMTAEDKAQVIGEHKKHDGDTGS) is disordered.

This sequence belongs to the universal ribosomal protein uS15 family. As to quaternary structure, part of the 30S ribosomal subunit. Forms a bridge to the 50S subunit in the 70S ribosome, contacting the 23S rRNA.

One of the primary rRNA binding proteins, it binds directly to 16S rRNA where it helps nucleate assembly of the platform of the 30S subunit by binding and bridging several RNA helices of the 16S rRNA. In terms of biological role, forms an intersubunit bridge (bridge B4) with the 23S rRNA of the 50S subunit in the ribosome. The sequence is that of Small ribosomal subunit protein uS15 from Solidesulfovibrio magneticus (strain ATCC 700980 / DSM 13731 / RS-1) (Desulfovibrio magneticus).